A 334-amino-acid chain; its full sequence is Glucokinase-like protein XF_1460 (334 aa).

18–23 (ADVGGT) serves as a coordination point for ATP.

The protein belongs to the bacterial glucokinase family.

The protein is Glucokinase-like protein XF_1460 of Xylella fastidiosa (strain 9a5c).